The primary structure comprises 130 residues: uncharacterized protein (130 aa).

This is an uncharacterized protein from Sinorhizobium fredii (strain NBRC 101917 / NGR234).